We begin with the raw amino-acid sequence, 186 residues long: Ribosome-recycling factor (186 aa).

Belongs to the RRF family.

Its subcellular location is the cytoplasm. Its function is as follows. Responsible for the release of ribosomes from messenger RNA at the termination of protein biosynthesis. May increase the efficiency of translation by recycling ribosomes from one round of translation to another. In Ralstonia pickettii (strain 12J), this protein is Ribosome-recycling factor.